The following is a 195-amino-acid chain: Cysteine/O-acetylserine efflux protein (195 aa).

At M1–S7 the chain is on the periplasmic side. The chain crosses the membrane as a helical span at residues A8–L28. The Cytoplasmic segment spans residues S29 to M46. A helical membrane pass occupies residues S47–I67. Over D68–P69 the chain is Periplasmic. The helical transmembrane segment at A70–I90 threads the bilayer. Residues A91–P104 are Cytoplasmic-facing. The helical transmembrane segment at I105–V125 threads the bilayer. Topologically, residues T126 to W141 are periplasmic. A helical membrane pass occupies residues V142–L162. Residues A163 to R176 lie on the Cytoplasmic side of the membrane. The helical transmembrane segment at Q177–F194 threads the bilayer. A topological domain (periplasmic) is located at residue Y195.

It belongs to the Rht family.

It is found in the cell inner membrane. It carries out the reaction O-acetyl-L-serine(in) = O-acetyl-L-serine(out). The catalysed reaction is L-cysteine(in) = L-cysteine(out). Its function is as follows. Exporter of O-acetylserine (OAS) and cysteine. The protein is Cysteine/O-acetylserine efflux protein (eamB) of Escherichia coli O1:K1 / APEC.